The chain runs to 70 residues: Cytoinsectotoxin-2c (70 aa).

It belongs to the cationic peptide 06 (cytoinsectotoxin) family. Expressed by the venom gland.

The protein resides in the secreted. Insecticidal and antimicrobial peptide. Has insecticidal activity against larvae of flesh fly S.carnaria. Has antibacterial activity against Gram-positive bacterium B.subtilis B-501 (MIC=1.25 uM) and Gram-negative bacterium E.coli DH5alpha (MIC=2.5 uM). The protein is Cytoinsectotoxin-2c of Lachesana tarabaevi (Spider).